The chain runs to 1080 residues: Adenylate cyclase type 7 (1080 aa).

At 1-33 (MPAKGRYFLNEGEEGPDQDALYEKYQLTSQHGP) the chain is on the cytoplasmic side. The next 6 helical transmembrane spans lie at 34-54 (LLLT…IIAF), 63-83 (QAIL…SVLM), 95-117 (ALAL…DAWT), 122-142 (AWEQ…LLPF), 147-167 (AVAV…SLMG), and 176-196 (VGLQ…TGAF). At 197 to 594 (HKHQMQDASR…YRLAPIPRAR (398 aa)) the chain is on the cytoplasmic side. Residues 279-406 (SILYADIVGF…HDVSLANRME (128 aa)) enclose the Guanylate cyclase 1 domain. Mg(2+) contacts are provided by aspartate 284, isoleucine 285, and aspartate 328. Residues 284–289 (DIVGFT), 326–328 (LGD), and arginine 372 contribute to the ATP site. The disordered stretch occupies residues 454 to 474 (DPRSQQPPPPSQHLPRPKGDA). Residues 477-482 (KMRASV) form a mediates regulation of adenylate cyclase activity by C5 alpha-induced G- beta and gamma pathway region. A mediates regulation of adenylate cyclase activity by sphingosine 1-phosphate-induced G alpha 13 pathway region spans residues 491 to 499 (WGAARPFAH). Residues 504-546 (ESVSSGETHVPNGRRPKSVPQRHRRTPDRSMSPKGRSEDDSYD) form a disordered region. The modulates adenylate cyclase activity by modulating the binding of G(s)alpha to the high-affinity G(s)alpha binding site in 7C1a/7C2 stretch occupies residues 506–584 (VSSGETHVPN…IFLEKGFERE (79 aa)). Over residues 515–529 (NGRRPKSVPQRHRRT) the composition is skewed to basic residues. Helical transmembrane passes span 595-615 (HDFA…VLLM), 620-640 (ALGV…GLCF), and 669-688 (LTLA…INLP). Asparagine 701 carries N-linked (GlcNAc...) asparagine glycosylation. Helical transmembrane passes span 718–737 (PLPY…SVFL) and 746–773 (VLLT…CGQG). 2 N-linked (GlcNAc...) asparagine glycosylation sites follow: asparagine 776 and asparagine 781. Residues 794–814 (DLKTMTNFYLVLFYITLLTLS) traverse the membrane as a helical segment. At 815–1080 (RQIDYYCRLD…TAKFQGLGLN (266 aa)) the chain is on the cytoplasmic side. The 145-residue stretch at 879–1023 (CVMFASVPDF…NTVNVASRME (145 aa)) folds into the Guanylate cyclase 2 domain. Residues lysine 931, 1010-1012 (DIW), 1017-1021 (NVASR), and lysine 1057 each bind ATP.

It belongs to the adenylyl cyclase class-4/guanylyl cyclase family. Requires Mg(2+) as cofactor. Mn(2+) serves as cofactor. Post-translationally, phosphorylated by PRKCD.

Its subcellular location is the membrane. It carries out the reaction ATP = 3',5'-cyclic AMP + diphosphate. Its activity is regulated as follows. Activated by the G protein alpha subunit. Activated by the G protein beta and gamma subunit complex. Activated by GNA13 and GNA12. Ethanol and phorbol 12,13-dibutanoate significantly potentiate adenylate cyclase activity generated in response to the activation of the prostanoid receptor by the agonist prostaglandin E1(1-) in a PKC-dependent manner. Inhibited by lithium. In terms of biological role, catalyzes the formation of cAMP in response to activation of G protein-coupled receptors. Functions in signaling cascades activated namely by thrombin and sphingosine 1-phosphate and mediates regulation of cAMP synthesis through synergistic action of the stimulatory G alpha protein with GNA13. Also, during inflammation, mediates zymosan-induced increase intracellular cAMP, leading to protein kinase A pathway activation in order to modulate innate immune responses through heterotrimeric G proteins G(12/13). Functions in signaling cascades activated namely by dopamine and C5 alpha chain and mediates regulation of cAMP synthesis through synergistic action of the stimulatory G protein with G beta:gamma complex. Functions, through cAMP response regulation, to keep inflammation under control during bacterial infection by sensing the presence of serum factors, such as the bioactive lysophospholipid (LPA) that regulate LPS-induced TNF-alpha production. However, it is also required for the optimal functions of B and T cells during adaptive immune responses by regulating cAMP synthesis in both B and T cells. The chain is Adenylate cyclase type 7 from Homo sapiens (Human).